A 145-amino-acid polypeptide reads, in one-letter code: 3-dehydroquinate dehydratase (145 aa).

Tyrosine 23 serves as the catalytic Proton acceptor. Substrate is bound by residues asparagine 74, histidine 80, and aspartate 87. Catalysis depends on histidine 100, which acts as the Proton donor. Substrate-binding positions include 101–102 (LS) and arginine 111.

This sequence belongs to the type-II 3-dehydroquinase family. In terms of assembly, homododecamer.

It catalyses the reaction 3-dehydroquinate = 3-dehydroshikimate + H2O. The protein operates within metabolic intermediate biosynthesis; chorismate biosynthesis; chorismate from D-erythrose 4-phosphate and phosphoenolpyruvate: step 3/7. Catalyzes a trans-dehydration via an enolate intermediate. This is 3-dehydroquinate dehydratase from Halalkalibacterium halodurans (strain ATCC BAA-125 / DSM 18197 / FERM 7344 / JCM 9153 / C-125) (Bacillus halodurans).